Here is a 434-residue protein sequence, read N- to C-terminus: Serine hydroxymethyltransferase (434 aa).

(6S)-5,6,7,8-tetrahydrofolate is bound by residues Leu132 and Gly136–Leu138. The residue at position 241 (Lys241) is an N6-(pyridoxal phosphate)lysine.

Belongs to the SHMT family. As to quaternary structure, homodimer. The cofactor is pyridoxal 5'-phosphate.

The protein localises to the cytoplasm. It catalyses the reaction (6R)-5,10-methylene-5,6,7,8-tetrahydrofolate + glycine + H2O = (6S)-5,6,7,8-tetrahydrofolate + L-serine. It functions in the pathway one-carbon metabolism; tetrahydrofolate interconversion. It participates in amino-acid biosynthesis; glycine biosynthesis; glycine from L-serine: step 1/1. Functionally, catalyzes the reversible interconversion of serine and glycine with tetrahydrofolate (THF) serving as the one-carbon carrier. This reaction serves as the major source of one-carbon groups required for the biosynthesis of purines, thymidylate, methionine, and other important biomolecules. Also exhibits THF-independent aldolase activity toward beta-hydroxyamino acids, producing glycine and aldehydes, via a retro-aldol mechanism. This chain is Serine hydroxymethyltransferase, found in Nitrobacter hamburgensis (strain DSM 10229 / NCIMB 13809 / X14).